Consider the following 151-residue polypeptide: Protein Turandot Z (151 aa).

Positions 1–23 (MSRLIHLSFVLALLACLTGPISA) are cleaved as a signal peptide.

It belongs to the Turandot family.

It is found in the secreted. Its function is as follows. A humoral factor that may play a role in stress tolerance. The polypeptide is Protein Turandot Z (Drosophila pseudoobscura pseudoobscura (Fruit fly)).